The primary structure comprises 506 residues: Methylthioalkylmalate synthase 1, chloroplastic (506 aa).

The transit peptide at 1–49 (MASSLLTSSVMIPTTGSTVVGRSVLPFQSSLHSLRLTHSYKNPALFISC) directs the protein to the chloroplast. In terms of domain architecture, Pyruvate carboxyltransferase spans 85–359 (VRVFDTTLRD…YTKIDTRQIM (275 aa)). Serine 98 is modified (phosphoserine).

Belongs to the alpha-IPM synthase/homocitrate synthase family. As to quaternary structure, monomer. Mn(2+) serves as cofactor. Highly expressed in leaves, flowers, roots and siliques. Not detected in flowers in PubMed:12432038.

It localises to the plastid. Its subcellular location is the chloroplast. It carries out the reaction an omega-(methylsulfanyl)-2-oxoalkanoate + acetyl-CoA + H2O = a 2-(omega-methylsulfanyl)alkylmalate + CoA + H(+). Its activity is regulated as follows. 1 mM DTT required for activity. Activated by ATP and inhibited by iodoacetamide. Its function is as follows. Determines the side chain length of aliphatic glucosinolate structures. Catalyzes exclusively the condensation reactions of both the first and second methionine carbon chain elongation. This Arabidopsis thaliana (Mouse-ear cress) protein is Methylthioalkylmalate synthase 1, chloroplastic (MAM1).